We begin with the raw amino-acid sequence, 272 residues long: Small ribosomal subunit biogenesis GTPase RsgA (272 aa).

The CP-type G domain maps to 56-207 (KNILIRPKVA…IIDTPGFSSI (152 aa)). GTP is bound by residues 105–108 (TKAD) and 151–159 (GQSGVGKTT). 4 residues coordinate Zn(2+): C230, C235, H237, and C245.

This sequence belongs to the TRAFAC class YlqF/YawG GTPase family. RsgA subfamily. As to quaternary structure, monomer. Associates with 30S ribosomal subunit, binds 16S rRNA. Zn(2+) serves as cofactor.

It is found in the cytoplasm. Functionally, one of several proteins that assist in the late maturation steps of the functional core of the 30S ribosomal subunit. Helps release RbfA from mature subunits. May play a role in the assembly of ribosomal proteins into the subunit. Circularly permuted GTPase that catalyzes slow GTP hydrolysis, GTPase activity is stimulated by the 30S ribosomal subunit. The polypeptide is Small ribosomal subunit biogenesis GTPase RsgA (Mycoplasmopsis pulmonis (strain UAB CTIP) (Mycoplasma pulmonis)).